Consider the following 295-residue polypeptide: 33 kDa chaperonin (295 aa).

Disulfide bonds link Cys-238-Cys-240 and Cys-271-Cys-274.

The protein belongs to the HSP33 family. In terms of processing, under oxidizing conditions two disulfide bonds are formed involving the reactive cysteines. Under reducing conditions zinc is bound to the reactive cysteines and the protein is inactive.

The protein localises to the cytoplasm. Redox regulated molecular chaperone. Protects both thermally unfolding and oxidatively damaged proteins from irreversible aggregation. Plays an important role in the bacterial defense system toward oxidative stress. This chain is 33 kDa chaperonin, found in Clostridium botulinum (strain Alaska E43 / Type E3).